Reading from the N-terminus, the 179-residue chain is Replication restart protein DnaT (179 aa).

The interval 156-179 (GGLPKRDVNTVSEPDSQIPPGFRG) is disordered.

This sequence belongs to the DnaT family. As to quaternary structure, homooligomerizes. Interacts with PriB. Component of the replication restart primosome. Primosome assembly occurs via a 'hand-off' mechanism. PriA binds to replication forks, subsequently PriB then DnaT bind; DnaT then displaces ssDNA to generate the helicase loading substrate.

Involved in the restart of stalled replication forks, which reloads the replicative helicase on sites other than the origin of replication. Can function in multiple replication restart pathways. Displaces ssDNA from a PriB-ssDNA complex. Probably forms a spiral filament on ssDNA. This is Replication restart protein DnaT from Escherichia coli O1:K1 / APEC.